The sequence spans 146 residues: Ribonuclease H (146 aa).

One can recognise an RNase H type-1 domain in the interval 1 to 143 (MKKRVTIYTD…CDELARQAIK (143 aa)). Positions 10, 48, 70, and 135 each coordinate Mg(2+).

It belongs to the RNase H family. As to quaternary structure, monomer. Mg(2+) is required as a cofactor.

It localises to the cytoplasm. The catalysed reaction is Endonucleolytic cleavage to 5'-phosphomonoester.. In terms of biological role, endonuclease that specifically degrades the RNA of RNA-DNA hybrids. This chain is Ribonuclease H, found in Chlorobium limicola (strain DSM 245 / NBRC 103803 / 6330).